The primary structure comprises 347 residues: MSDDPTTPELESESESELAFEGALRPRTLAEFVGQAKVRGQLQLLLTAARMQERTADHILLAGPPGLGKTTLAMIVAHESDRPLRLSSGPAIQHAGDLAALLSSLTPGEVLFIDEIHRMARTAEEMLYLAMEDFRIDIMVGKGAGATSIPLDLAPFTLVGATTRSGLLPNPLRDRFGFTAHLEFYDEGELAQVLARAAVMLEFEIDGEALAEIAGRCRGTPRIANRLLRRVRDYALVHGGRADIAAVHAALELYDVNELGLDRLDRAVLHAILERFEGGPVGLNTLAVSVGEEPETIESVVEPFLVRIGLLSRTPRGRVATVAAWRHFGLAAPRQGHSQPPSLMDDL.

A large ATPase domain (RuvB-L) region spans residues 1–185 (MSDDPTTPEL…FGFTAHLEFY (185 aa)). Residues Leu24, Arg25, Gly66, Lys69, Thr70, Thr71, 132–134 (EDF), Arg175, Tyr185, and Arg222 each bind ATP. Thr70 is a binding site for Mg(2+). The small ATPAse domain (RuvB-S) stretch occupies residues 186–255 (DEGELAQVLA…AVHAALELYD (70 aa)). Residues 258–347 (ELGLDRLDRA…SQPPSLMDDL (90 aa)) are head domain (RuvB-H). Residues Arg313 and Arg318 each coordinate DNA.

Belongs to the RuvB family. In terms of assembly, homohexamer. Forms an RuvA(8)-RuvB(12)-Holliday junction (HJ) complex. HJ DNA is sandwiched between 2 RuvA tetramers; dsDNA enters through RuvA and exits via RuvB. An RuvB hexamer assembles on each DNA strand where it exits the tetramer. Each RuvB hexamer is contacted by two RuvA subunits (via domain III) on 2 adjacent RuvB subunits; this complex drives branch migration. In the full resolvosome a probable DNA-RuvA(4)-RuvB(12)-RuvC(2) complex forms which resolves the HJ.

The protein localises to the cytoplasm. The enzyme catalyses ATP + H2O = ADP + phosphate + H(+). Its function is as follows. The RuvA-RuvB-RuvC complex processes Holliday junction (HJ) DNA during genetic recombination and DNA repair, while the RuvA-RuvB complex plays an important role in the rescue of blocked DNA replication forks via replication fork reversal (RFR). RuvA specifically binds to HJ cruciform DNA, conferring on it an open structure. The RuvB hexamer acts as an ATP-dependent pump, pulling dsDNA into and through the RuvAB complex. RuvB forms 2 homohexamers on either side of HJ DNA bound by 1 or 2 RuvA tetramers; 4 subunits per hexamer contact DNA at a time. Coordinated motions by a converter formed by DNA-disengaged RuvB subunits stimulates ATP hydrolysis and nucleotide exchange. Immobilization of the converter enables RuvB to convert the ATP-contained energy into a lever motion, pulling 2 nucleotides of DNA out of the RuvA tetramer per ATP hydrolyzed, thus driving DNA branch migration. The RuvB motors rotate together with the DNA substrate, which together with the progressing nucleotide cycle form the mechanistic basis for DNA recombination by continuous HJ branch migration. Branch migration allows RuvC to scan DNA until it finds its consensus sequence, where it cleaves and resolves cruciform DNA. The protein is Holliday junction branch migration complex subunit RuvB of Leifsonia xyli subsp. xyli (strain CTCB07).